Here is an 86-residue protein sequence, read N- to C-terminus: MAQKKGGGSTRNGRDSESKRLGVKVYGGQAINAGGIIIRQRGTRTHAGVNVGMGKDHTLFALVDGHVKFATRGEGKKQFVDVVPAA.

Gly residues predominate over residues 1–10 (MAQKKGGGST). The interval 1–21 (MAQKKGGGSTRNGRDSESKRL) is disordered.

Belongs to the bacterial ribosomal protein bL27 family.

The sequence is that of Large ribosomal subunit protein bL27 from Ralstonia nicotianae (strain ATCC BAA-1114 / GMI1000) (Ralstonia solanacearum).